A 307-amino-acid chain; its full sequence is Cytochrome c1 1, heme protein, mitochondrial (307 aa).

The N-terminal 64 residues, 1-64 (MVGGGVIQQI…LLSFSTVASA (64 aa)), are a transit peptide targeting the mitochondrion. Residues 65–270 (DEAEHGLESP…EPEMEERKLM (206 aa)) are Mitochondrial intermembrane-facing. Residues 90–246 (ASIRRGHQVY…YEDGVPATEA (157 aa)) form the Cytochrome c domain. Heme c is bound by residues C103, C106, H107, and M226. Residues 271-288 (GFKWIFLLSLALLQAAYY) traverse the membrane as a helical segment. The Mitochondrial matrix segment spans residues 289 to 307 (RRLKWSVLKSRKLVLDVVN).

It belongs to the cytochrome c family. In terms of assembly, component of the ubiquinol-cytochrome c oxidoreductase (cytochrome b-c1 complex, complex III, CIII), a multisubunit enzyme composed of 10 subunits. The complex is composed of 3 respiratory subunits cytochrome b (MT-CYB), cytochrome c1 (CYC1-1 or CYC1-2) and Rieske protein (UCR1-1 or UCR1-2), 2 core protein subunits MPPalpha1 (or MPPalpha2) and MPPB, and 5 low-molecular weight protein subunits QCR7-1 (or QCR7-2), UCRQ-1 (or UCRQ-2), QCR9, UCRY and probably QCR6-1 (or QCR6-2). The complex exists as an obligatory dimer and forms supercomplexes (SCs) in the inner mitochondrial membrane with NADH-ubiquinone oxidoreductase (complex I, CI), resulting in different assemblies (supercomplexes SCI(1)III(2) and SCI(2)III(4)). Post-translationally, binds 1 heme c group covalently per subunit.

Its subcellular location is the mitochondrion inner membrane. Component of the ubiquinol-cytochrome c oxidoreductase, a multisubunit transmembrane complex that is part of the mitochondrial electron transport chain which drives oxidative phosphorylation. The respiratory chain contains 3 multisubunit complexes succinate dehydrogenase (complex II, CII), ubiquinol-cytochrome c oxidoreductase (cytochrome b-c1 complex, complex III, CIII) and cytochrome c oxidase (complex IV, CIV), that cooperate to transfer electrons derived from NADH and succinate to molecular oxygen, creating an electrochemical gradient over the inner membrane that drives transmembrane transport and the ATP synthase. The cytochrome b-c1 complex catalyzes electron transfer from ubiquinol to cytochrome c, linking this redox reaction to translocation of protons across the mitochondrial inner membrane, with protons being carried across the membrane as hydrogens on the quinol. In the process called Q cycle, 2 protons are consumed from the matrix, 4 protons are released into the intermembrane space and 2 electrons are passed to cytochrome c. Cytochrome c1 is a catalytic core subunit containing a c-type heme. It transfers electrons from the [2Fe-2S] iron-sulfur cluster of the Rieske protein to cytochrome c. The chain is Cytochrome c1 1, heme protein, mitochondrial (CYC1-1) from Arabidopsis thaliana (Mouse-ear cress).